The primary structure comprises 488 residues: MSLPNTSSASEDKMCEGNRTAMASPQLLPLVVVLSSISLVTVGLNLLVLYAVRSERKLHTVGNLYIVSLSVADLIVGAVVMPMNILYLIMTKWSLGRPLCLFWLSMDYVASTASIFSVFILCIDRYRSVQQPLRYLRYRTKTRASATILGAWFLSFLWVIPILGWHHFTPLAPELREDKCETDFYNVTWFKIMTAIINFYLPTLLMLWFYVKIYKAVRRHCQHRQLTNGSLPTFLEIKLRSEDAKEGAKKPGKESPWGVQKRPSRDPTGGLDQKSTSEDPKVTSPTVFSQEGERETVTRPCFRLDVMQTQPVPEGDARGSKANDQTLSQPKMDEQSLSTCRRISETSEDQTLVDRQSFSRTTDSDTSIEPGLGKVKARSRSNSGLDYIKVTWKRLRSHSRQYVSGLHLNRERKAAKQLGCIMAAFILCWIPYFIFFMVIAFCNSCCSEPVHMFTIWLGYINSTLNPLIYPLCNENFKKTFKKILHIRS.

Over 1-29 (MSLPNTSSASEDKMCEGNRTAMASPQLLP) the chain is Extracellular. 2 N-linked (GlcNAc...) asparagine glycosylation sites follow: Asn-5 and Asn-18. Residues 30–50 (LVVVLSSISLVTVGLNLLVLY) form a helical membrane-spanning segment. Topologically, residues 51–64 (AVRSERKLHTVGNL) are cytoplasmic. The chain crosses the membrane as a helical span at residues 65-89 (YIVSLSVADLIVGAVVMPMNILYLI). Over 90–97 (MTKWSLGR) the chain is Extracellular. The chain crosses the membrane as a helical span at residues 98-123 (PLCLFWLSMDYVASTASIFSVFILCI). A disulfide bond links Cys-100 and Cys-180. Histamine contacts are provided by Asp-107 and Thr-112. Positions 107-112 (DYVAST) are important for agonist binding. Residues 124-144 (DRYRSVQQPLRYLRYRTKTRA) lie on the Cytoplasmic side of the membrane. Residues Thr-140 and Thr-142 each carry the phosphothreonine modification. Residues 145-164 (SATILGAWFLSFLWVIPILG) traverse the membrane as a helical segment. Residues 165–188 (WHHFTPLAPELREDKCETDFYNVT) are Extracellular-facing. A helical membrane pass occupies residues 189–211 (WFKIMTAIINFYLPTLLMLWFYV). Position 198 (Asn-198) interacts with histamine. Residues 212–417 (KIYKAVRRHC…LNRERKAAKQ (206 aa)) are Cytoplasmic-facing. Position 230 is a phosphoserine (Ser-230). Positions 245–337 (KEGAKKPGKE…SQPKMDEQSL (93 aa)) are disordered. The span at 322 to 337 (ANDQTLSQPKMDEQSL) shows a compositional bias: polar residues. Ser-344, Ser-347, Ser-381, Ser-383, Ser-397, and Ser-399 each carry phosphoserine. Residues 418–441 (LGCIMAAFILCWIPYFIFFMVIAF) traverse the membrane as a helical segment. The segment at 425-429 (FILCW) is important for agonist binding. A histamine-binding site is contributed by Tyr-432. A disulfide bridge links Cys-442 with Cys-445. Residues 442-447 (CNSCCS) lie on the Extracellular side of the membrane. Residues 448 to 470 (EPVHMFTIWLGYINSTLNPLIYP) form a helical membrane-spanning segment. Over 471-488 (LCNENFKKTFKKILHIRS) the chain is Cytoplasmic.

This sequence belongs to the G-protein coupled receptor 1 family. In terms of processing, phosphorylation at sites in the second and third cytoplasmic loops independently contribute to agonist-induced receptor down-regulation.

Its subcellular location is the cell membrane. In terms of biological role, G-protein-coupled receptor for histamine, a biogenic amine that functions as an immune modulator and a neurotransmitter. Through the H1 receptor, histamine mediates the contraction of smooth muscles and increases capillary permeability due to contraction of terminal venules. Also mediates neurotransmission in the central nervous system and thereby regulates circadian rhythms, emotional and locomotor activities as well as cognitive functions. The protein is Histamine H1 receptor of Mus musculus (Mouse).